Here is a 296-residue protein sequence, read N- to C-terminus: Polyamine aminopropyltransferase (296 aa).

The region spanning 16-251 (HLWYFEYYTG…GMWSYTFASK (236 aa)) is the PABS domain. Glutamine 46 is an S-methyl-5'-thioadenosine binding site. Spermidine-binding residues include histidine 77 and aspartate 101. S-methyl-5'-thioadenosine-binding positions include glutamate 121 and 152-153 (NG). Aspartate 170 (proton acceptor) is an active-site residue. Residue 170–173 (DSTD) participates in spermidine binding.

This sequence belongs to the spermidine/spermine synthase family. In terms of assembly, homodimer or homotetramer.

The protein localises to the cytoplasm. It catalyses the reaction S-adenosyl 3-(methylsulfanyl)propylamine + putrescine = S-methyl-5'-thioadenosine + spermidine + H(+). The protein operates within amine and polyamine biosynthesis; spermidine biosynthesis; spermidine from putrescine: step 1/1. Its function is as follows. Catalyzes the irreversible transfer of a propylamine group from the amino donor S-adenosylmethioninamine (decarboxy-AdoMet) to putrescine (1,4-diaminobutane) to yield spermidine. The chain is Polyamine aminopropyltransferase from Thermotoga neapolitana (strain ATCC 49049 / DSM 4359 / NBRC 107923 / NS-E).